The primary structure comprises 467 residues: A-type ATP synthase subunit B (467 aa).

Residues Gly95–Val114 are disordered.

This sequence belongs to the ATPase alpha/beta chains family. As to quaternary structure, has multiple subunits with at least A(3), B(3), C, D, E, F, H, I and proteolipid K(x).

It is found in the cell membrane. In terms of biological role, component of the A-type ATP synthase that produces ATP from ADP in the presence of a proton gradient across the membrane. The B chain is a regulatory subunit. This is A-type ATP synthase subunit B from Pyrobaculum islandicum (strain DSM 4184 / JCM 9189 / GEO3).